A 250-amino-acid polypeptide reads, in one-letter code: Cytochrome c oxidase subunit 2 (250 aa).

Residues 1 to 27 (MGLLFNNLIMNFDAPSPWGIYFQDSAT) are Mitochondrial intermembrane-facing. A helical transmembrane segment spans residues 28–61 (PQMEGLVELHDNIMYYLVVILFGVGWILLSIIRN). Residues 62 to 77 (YISTKSPISHKYLNHG) lie on the Mitochondrial matrix side of the membrane. Residues 78-107 (TLIELIWTITPAVILILIAFPSFKLLYLMD) traverse the membrane as a helical segment. The Mitochondrial intermembrane portion of the chain corresponds to 108–250 (EVSDPSMSVL…EKFLTWLEEQ (143 aa)). 6 residues coordinate Cu cation: H185, C220, E222, C224, H228, and M231. Position 222 (E222) interacts with Mg(2+).

This sequence belongs to the cytochrome c oxidase subunit 2 family. In terms of assembly, component of the cytochrome c oxidase (complex IV, CIV), a multisubunit enzyme composed of 11 subunits. The complex is composed of a catalytic core of 3 subunits Cox1, Cox2 and Cox3, encoded in the mitochondrial DNA, and 8 supernumerary subunits Cox4, Cox5a/Cox5, Cox6, Cox7, Cox8, Cox7a/Cox9, Cox6b/Cox12 and Cox6a/Cox13, which are encoded in the nuclear genome. The complex exists as a monomer or a dimer and forms respiratory supercomplexes (SCs) in the inner mitochondrial membrane with NADH-ubiquinone oxidoreductase (complex I, CI) and ubiquinol-cytochrome c oxidoreductase (cytochrome b-c1 complex, complex III, CIII), resulting in various different assemblies (supercomplexes I(1)IV(1), I(1)III(3)IV(2), III(2)IV(1) and III(2)IV(2) as well as larger supercomplexes of compositions like I(1)III(2)IV(5-6)). Requires Cu cation as cofactor.

The protein resides in the mitochondrion inner membrane. It carries out the reaction 4 Fe(II)-[cytochrome c] + O2 + 8 H(+)(in) = 4 Fe(III)-[cytochrome c] + 2 H2O + 4 H(+)(out). Its function is as follows. Component of the cytochrome c oxidase, the last enzyme in the mitochondrial electron transport chain which drives oxidative phosphorylation. The respiratory chain contains 3 multisubunit complexes succinate dehydrogenase (complex II, CII), ubiquinol-cytochrome c oxidoreductase (cytochrome b-c1 complex, complex III, CIII) and cytochrome c oxidase (complex IV, CIV), that cooperate to transfer electrons derived from NADH and succinate to molecular oxygen, creating an electrochemical gradient over the inner membrane that drives transmembrane transport and the ATP synthase. Cytochrome c oxidase is the component of the respiratory chain that catalyzes the reduction of oxygen to water. Electrons originating from reduced cytochrome c in the intermembrane space (IMS) are transferred via the dinuclear copper A center (CU(A)) of Cox2 and heme A of Cox1 to the active site in Cox1, a binuclear center (BNC) formed by heme A3 and copper B (CU(B)). The BNC reduces molecular oxygen to 2 water molecules using 4 electrons from cytochrome c in the IMS and 4 protons from the mitochondrial matrix. This Neurospora crassa (strain ATCC 24698 / 74-OR23-1A / CBS 708.71 / DSM 1257 / FGSC 987) protein is Cytochrome c oxidase subunit 2 (cox-2).